Consider the following 406-residue polypeptide: Argininosuccinate synthase (406 aa).

Residues 11 to 19 (AYSGGLDTS) and Ala-38 each bind ATP. L-citrulline is bound by residues Tyr-91 and Ser-96. Gly-121 provides a ligand contact to ATP. Residues Thr-123, Asn-127, and Asp-128 each coordinate L-aspartate. L-citrulline is bound at residue Asn-127. L-citrulline contacts are provided by Arg-131, Ser-181, Ser-190, Glu-266, and Tyr-278.

It belongs to the argininosuccinate synthase family. Type 1 subfamily. Homotetramer.

The protein resides in the cytoplasm. It catalyses the reaction L-citrulline + L-aspartate + ATP = 2-(N(omega)-L-arginino)succinate + AMP + diphosphate + H(+). It participates in amino-acid biosynthesis; L-arginine biosynthesis; L-arginine from L-ornithine and carbamoyl phosphate: step 2/3. This is Argininosuccinate synthase from Campylobacter jejuni subsp. jejuni serotype O:2 (strain ATCC 700819 / NCTC 11168).